The primary structure comprises 768 residues: Tripartite motif-containing protein 67 (768 aa).

The RING-type; degenerate zinc-finger motif lies at 7–42 (CPVCGSLFREPIILPCSHNVCLPCARTIAVQTPDGE). Positions 55-70 (AAAAATPPDQDAAAGA) are enriched in low complexity. 2 disordered regions span residues 55 to 74 (AAAAATPPDQDAAAGATSGG) and 247 to 284 (QPPPPPTPPEATPAVTGTSTASSAGGCRSPGGAGASAP). The B box-type 1; degenerate zinc-finger motif lies at 201–248 (AICQLCDRTPPEPAATLCEQCDVLYCATCQLKCHPSRGPFAKHRLVQP). Residues 247–257 (QPPPPPTPPEA) show a composition bias toward pro residues. Residues 285 to 327 (RKFPTCPEHEMENYSMYCVSCRSPVCYMCLEEGRHSKHEVKPL) form a B box-type 2 zinc finger. C290, H293, C313, and H319 together coordinate Zn(2+). Residues 332–369 (KQHKAQLSQALNGVSDKAKEAKEFLVQLKNILQQIQEN) are a coiled coil. In terms of domain architecture, COS spans 435–493 (IKEDDPSGFLQISDALIKRVQTSQEQWVKGALEPKVSAEFDLTLDSEPLLQAIHQLDFV). In terms of domain architecture, Fibronectin type-III spans 498–592 (PPVPLLQLEK…KTVVLQTSDV (95 aa)). A B30.2/SPRY domain is found at 574-765 (NSSGVGPYSK…VPTNLGRPKL (192 aa)).

It is found in the cytoplasm. The protein resides in the cytoskeleton. The protein is Tripartite motif-containing protein 67 (Trim67) of Mus musculus (Mouse).